The sequence spans 346 residues: Probable alcohol dehydrogenase AdhA (346 aa).

Residues C51, H73, C109, C112, C115, C123, and C165 each contribute to the Zn(2+) site.

It belongs to the zinc-containing alcohol dehydrogenase family. The cofactor is Zn(2+).

The enzyme catalyses a primary alcohol + NAD(+) = an aldehyde + NADH + H(+). The catalysed reaction is a secondary alcohol + NAD(+) = a ketone + NADH + H(+). In Mycobacterium tuberculosis (strain CDC 1551 / Oshkosh), this protein is Probable alcohol dehydrogenase AdhA (adhA).